The sequence spans 170 residues: CDP-archaeol synthase (170 aa).

A run of 5 helical transmembrane segments spans residues 9–29, 53–73, 79–99, 114–134, and 140–160; these read AFWY…LGGG, GFFG…FLLP, LGIA…GDLI, PAVG…AYPV, and GEVL…NIFA.

It belongs to the CDP-archaeol synthase family. Mg(2+) serves as cofactor.

It localises to the cell membrane. The catalysed reaction is 2,3-bis-O-(geranylgeranyl)-sn-glycerol 1-phosphate + CTP + H(+) = CDP-2,3-bis-O-(geranylgeranyl)-sn-glycerol + diphosphate. The protein operates within membrane lipid metabolism; glycerophospholipid metabolism. In terms of biological role, catalyzes the formation of CDP-2,3-bis-(O-geranylgeranyl)-sn-glycerol (CDP-archaeol) from 2,3-bis-(O-geranylgeranyl)-sn-glycerol 1-phosphate (DGGGP) and CTP. This reaction is the third ether-bond-formation step in the biosynthesis of archaeal membrane lipids. The sequence is that of CDP-archaeol synthase from Pyrococcus horikoshii (strain ATCC 700860 / DSM 12428 / JCM 9974 / NBRC 100139 / OT-3).